A 118-amino-acid chain; its full sequence is Non-specific lipid-transfer protein 3 (118 aa).

A signal peptide spans 1–25 (MARAAATQLVLVAMVAAMLLVATDA). Disulfide bonds link Cys-29–Cys-77, Cys-39–Cys-54, Cys-55–Cys-100, and Cys-75–Cys-114.

Belongs to the plant LTP family.

In terms of biological role, plant non-specific lipid-transfer proteins transfer phospholipids as well as galactolipids across membranes. May play a role in wax or cutin deposition in the cell walls of expanding epidermal cells and certain secretory tissues. In Hordeum vulgare (Barley), this protein is Non-specific lipid-transfer protein 3 (LTP3).